Here is a 342-residue protein sequence, read N- to C-terminus: Heat-inducible transcription repressor HrcA (342 aa).

The protein belongs to the HrcA family.

In terms of biological role, negative regulator of class I heat shock genes (grpE-dnaK-dnaJ and groELS operons). Prevents heat-shock induction of these operons. The sequence is that of Heat-inducible transcription repressor HrcA from Geobacter sulfurreducens (strain ATCC 51573 / DSM 12127 / PCA).